A 243-amino-acid polypeptide reads, in one-letter code: UMP-CMP kinase 1 (243 aa).

ATP is bound at residue 29-34 (GSGKGT). An NMP region spans residues 49–78 (SAGDLLREEAKYDTEQGTMIKNLMNEGKLV). A ribonucleoside 5'-phosphate contacts are provided by residues arginine 55, 76–78 (KLV), and 103–106 (GFPR). Asparagine 110 is a CMP binding site. An LID region spans residues 141–149 (NRNQGRDDD). Position 142 (arginine 142) interacts with ATP. A ribonucleoside 5'-phosphate is bound by residues arginine 146 and arginine 157. Arginine 185 provides a ligand contact to ATP.

Belongs to the adenylate kinase family. UMP-CMP kinase subfamily. In terms of assembly, monomer. Mg(2+) serves as cofactor.

The protein resides in the cytoplasm. Its subcellular location is the nucleus. It catalyses the reaction UMP + ATP = UDP + ADP. The catalysed reaction is CMP + ATP = CDP + ADP. It carries out the reaction dCMP + ATP = dCDP + ADP. Its function is as follows. Catalyzes the phosphorylation of pyrimidine nucleoside monophosphates at the expense of ATP. Plays an important role in de novo pyrimidine nucleotide biosynthesis. Has preference for UMP and CMP as phosphate acceptors. This Oryza sativa subsp. japonica (Rice) protein is UMP-CMP kinase 1.